Consider the following 217-residue polypeptide: Octanoyltransferase (217 aa).

A BPL/LPL catalytic domain is found at 34–216; the sequence is SETRDELWLL…AASRASRHDR (183 aa). Substrate contacts are provided by residues 73 to 80, 140 to 142, and 153 to 155; these read RGGQVTWH, ALG, and GLS. The Acyl-thioester intermediate role is filled by cysteine 171.

The protein belongs to the LipB family.

Its subcellular location is the cytoplasm. It carries out the reaction octanoyl-[ACP] + L-lysyl-[protein] = N(6)-octanoyl-L-lysyl-[protein] + holo-[ACP] + H(+). Its pathway is protein modification; protein lipoylation via endogenous pathway; protein N(6)-(lipoyl)lysine from octanoyl-[acyl-carrier-protein]: step 1/2. Functionally, catalyzes the transfer of endogenously produced octanoic acid from octanoyl-acyl-carrier-protein onto the lipoyl domains of lipoate-dependent enzymes. Lipoyl-ACP can also act as a substrate although octanoyl-ACP is likely to be the physiological substrate. The polypeptide is Octanoyltransferase (Halorhodospira halophila (strain DSM 244 / SL1) (Ectothiorhodospira halophila (strain DSM 244 / SL1))).